A 471-amino-acid polypeptide reads, in one-letter code: V-type ATP synthase beta chain (471 aa).

This sequence belongs to the ATPase alpha/beta chains family.

Its function is as follows. Produces ATP from ADP in the presence of a proton gradient across the membrane. The V-type beta chain is a regulatory subunit. The polypeptide is V-type ATP synthase beta chain (Streptococcus pyogenes serotype M12 (strain MGAS2096)).